We begin with the raw amino-acid sequence, 221 residues long: Sugar transporter SWEET1 (221 aa).

Helical transmembrane passes span alanine 3–phenylalanine 23, valine 42–alanine 62, isoleucine 68–leucine 88, valine 96–tryptophan 116, leucine 126–alanine 146, leucine 160–phenylalanine 180, and tyrosine 186–tryptophan 206. The 85-residue stretch at leucine 10–lysine 94 folds into the MtN3/slv 1 domain. In terms of domain architecture, MtN3/slv 2 spans glutamine 127 to glutamine 212. The segment at alanine 149–threonine 221 is mediates interaction with TRPV2.

It belongs to the SWEET sugar transporter family. Interacts with TRPV2; the interaction probably occurs intracellularly and depends on TRPV2 N-glycosylation.

It is found in the golgi apparatus membrane. Its subcellular location is the cell membrane. Mediates sugar transport across membranes. May stimulate V(D)J recombination by the activation of RAG1. This is Sugar transporter SWEET1 (SLC50A1) from Papio anubis (Olive baboon).